Reading from the N-terminus, the 213-residue chain is tRNA (guanine-N(7)-)-methyltransferase (213 aa).

Residues E44, E69, N96, and D118 each coordinate S-adenosyl-L-methionine. D118 is an active-site residue. K122 lines the substrate pocket. The segment at 124–129 (RHEKRR) is interaction with RNA. Residues D154 and 191–194 (TEYE) each bind substrate.

This sequence belongs to the class I-like SAM-binding methyltransferase superfamily. TrmB family.

The catalysed reaction is guanosine(46) in tRNA + S-adenosyl-L-methionine = N(7)-methylguanosine(46) in tRNA + S-adenosyl-L-homocysteine. It participates in tRNA modification; N(7)-methylguanine-tRNA biosynthesis. Catalyzes the formation of N(7)-methylguanine at position 46 (m7G46) in tRNA. The chain is tRNA (guanine-N(7)-)-methyltransferase from Bacillus licheniformis (strain ATCC 14580 / DSM 13 / JCM 2505 / CCUG 7422 / NBRC 12200 / NCIMB 9375 / NCTC 10341 / NRRL NRS-1264 / Gibson 46).